A 530-amino-acid chain; its full sequence is GH3 domain-containing protein (530 aa).

The N-terminal stretch at 1-17 (MLLWPLLLLLLLLPTLA) is a signal peptide. The tract at residues 99 to 122 (LTKASQTQQEDSGEQPLPPTSNQD) is disordered. Residue N450 is glycosylated (N-linked (GlcNAc...) asparagine). Q489 carries the N5-methylglutamine modification.

The protein belongs to the GH3 family. In terms of processing, methylated at Gln-489 by N6AMT1.

The protein resides in the endoplasmic reticulum. Its subcellular location is the nucleus envelope. The chain is GH3 domain-containing protein (GHDC) from Homo sapiens (Human).